We begin with the raw amino-acid sequence, 897 residues long: uncharacterized protein (897 aa).

Disordered stretches follow at residues 25-89 (RLQD…TRKR) and 106-168 (PTRL…TPPS). Composition is skewed to low complexity over residues 32–44 (SSSP…SSSS), 57–68 (SLQNSQSSSYSL), and 106–142 (PTRL…SSVS). The Helicase ATP-binding domain maps to 263 to 446 (SMEQSSKCGG…YSLLKFLRIK (184 aa)). 276–283 (DDMGLGKT) is an ATP binding site. Residues 397-400 (DEAH) carry the DEAH box motif. An RING-type zinc finger spans residues 606-655 (CSVCLDPCLAPVFIIPCGHFTCQECMSMLVGQKYGSSSTSTIIAKCPMCR). Positions 727–890 (QARQTILDII…LSRLDKEELL (164 aa)) constitute a Helicase C-terminal domain.

Belongs to the SNF2/RAD54 helicase family.

Its subcellular location is the cytoplasm. It is found in the nucleus. This is an uncharacterized protein from Schizosaccharomyces pombe (strain 972 / ATCC 24843) (Fission yeast).